The sequence spans 312 residues: Ribosomal protein L11 methyltransferase (312 aa).

S-adenosyl-L-methionine is bound by residues T160, G181, D203, and N246.

The protein belongs to the methyltransferase superfamily. PrmA family.

It is found in the cytoplasm. The enzyme catalyses L-lysyl-[protein] + 3 S-adenosyl-L-methionine = N(6),N(6),N(6)-trimethyl-L-lysyl-[protein] + 3 S-adenosyl-L-homocysteine + 3 H(+). Methylates ribosomal protein L11. This Staphylococcus aureus (strain COL) protein is Ribosomal protein L11 methyltransferase.